The chain runs to 417 residues: D-amino acid dehydrogenase (417 aa).

Residue 3 to 17 (VIVLGSGVIGVTAAW) coordinates FAD.

It belongs to the DadA oxidoreductase family. FAD is required as a cofactor.

It carries out the reaction a D-alpha-amino acid + A + H2O = a 2-oxocarboxylate + AH2 + NH4(+). The protein operates within amino-acid degradation; D-alanine degradation; NH(3) and pyruvate from D-alanine: step 1/1. Functionally, oxidative deamination of D-amino acids. The chain is D-amino acid dehydrogenase from Methylobacillus flagellatus (strain ATCC 51484 / DSM 6875 / VKM B-1610 / KT).